Here is a 363-residue protein sequence, read N- to C-terminus: MGLRTSPLHGRHEDRGASFTEFGGWNMPVDFDGIQAEHAAVREAAGIFDVSHMGEIEVSGPDAERLMQRLTTNDVSRLDPGDAQYAAITDDDGIMIDDTVVYRTPADWPGAFLFVPNAGHDAAAFDRWTDHRDAHDLDASVDNVTTDYGMVAVQGPDAPDLVAARAGDGVHDLGRFEAATVGVAGVECLVANTGYTGEAGVEIVFPADGAGAVWDAIANDCQPCGLGARDTLRMEHGFLLSGQDFDPEENPRTPFEAGIGFAVAPESGFVGRDALADTDSPEQQFVGLTLDERGVPRHGYAVTTPAGDEIGTVTSGTMSPTLGEPIGLGYVDSAHAADGTTVAVRIRGTDKQATITTPPFLDQ.

Belongs to the GcvT family. In terms of assembly, the glycine cleavage system is composed of four proteins: P, T, L and H.

The enzyme catalyses N(6)-[(R)-S(8)-aminomethyldihydrolipoyl]-L-lysyl-[protein] + (6S)-5,6,7,8-tetrahydrofolate = N(6)-[(R)-dihydrolipoyl]-L-lysyl-[protein] + (6R)-5,10-methylene-5,6,7,8-tetrahydrofolate + NH4(+). The glycine cleavage system catalyzes the degradation of glycine. This is Probable aminomethyltransferase from Halobacterium salinarum (strain ATCC 29341 / DSM 671 / R1).